The chain runs to 32 residues: MSMTSDDIIYVVFALGLVVSFGLGAITAGVFR.

A helical transmembrane segment spans residues I8–A28.

Belongs to the inovirus G7P protein family.

The protein localises to the virion. It is found in the host membrane. Its function is as follows. May initiate with G9P the virion concomitant assembly-budding process, by interacting with the packaging signal of the viral genome. The assembly-budding takes place at the host inner membrane. In turn, G7P and G9P are present at the end of the filamentous virion that emerges first from the bacterial host. In Escherichia coli (Bacteriophage IKe), this protein is Tail virion protein G7P (VII).